The following is a 495-amino-acid chain: Beta-galactoside alpha-2,6-sialyltransferase 2 (495 aa).

Residues 1 to 10 (MKPHLKQWRQ) lie on the Cytoplasmic side of the membrane. A helical; Signal-anchor for type II membrane protein transmembrane segment spans residues 11-31 (GMLCGVFAWGLFFVVIFLYFT). Topologically, residues 32–495 (DSSPAKPAPS…LQAVRCPPGA (464 aa)) are lumenal. Disordered regions lie at residues 63-90 (GASEGLPEGADLRRGSPRGLPSGPLRTW) and 107-165 (GRTS…EDGE). Residues 134 to 143 (PEGARPPRAA) show a composition bias toward low complexity. Residues 144–153 (PGRRAKRGPR) show a composition bias toward basic residues. 3 disulfides stabilise this stretch: Cys225/Cys491, Cys268/Cys420, and Cys438/Cys449. Residues Asn279 and Asn309 are each glycosylated (N-linked (GlcNAc...) asparagine).

It belongs to the glycosyltransferase 29 family.

It localises to the golgi apparatus. Its subcellular location is the golgi stack membrane. The enzyme catalyses a beta-D-galactoside + CMP-N-acetyl-beta-neuraminate = an N-acetyl-alpha-neuraminyl-(2-&gt;6)-beta-D-galactosyl derivative + CMP + H(+). Its function is as follows. Transfers sialic acid from the donor of substrate CMP-sialic acid to galactose containing acceptor substrates. Has alpha-2,6-sialyltransferase activity toward oligosaccharides that have the Gal-beta-1,4-GlcNAc sequence at the non-reducing end of their carbohydrate groups, but it has weak or no activities toward glycoproteins and glycolipids. The protein is Beta-galactoside alpha-2,6-sialyltransferase 2 (ST6GAL2) of Bos taurus (Bovine).